Consider the following 98-residue polypeptide: Small ribosomal subunit protein bS16 (98 aa).

The protein belongs to the bacterial ribosomal protein bS16 family.

The chain is Small ribosomal subunit protein bS16 from Pseudothermotoga lettingae (strain ATCC BAA-301 / DSM 14385 / NBRC 107922 / TMO) (Thermotoga lettingae).